A 440-amino-acid polypeptide reads, in one-letter code: MKLVLGALQWTAFIIAAAIVVPVAVAQSFHLDHSDSARLIQSTFFVLGIAAVIQCLKGHRLPINESPAGLWWGVYTIYAGLTGTVFATYGDTLRGLQGALLVSAVCFFLLSVFKVIDRLAKLFTPVVTGVYLLLLVMQLSQPIIKGILGIGYRQDGVDGLVFGLALVVIAAAFIMTNSNIMFFKQYSILLALFGGWVLFAAAGAAKPIEMPDRLFQLPSLFPFGTPLFNSGLIITSIFITILLIVNMLASMKVVDIAMKKFSKQPDGKHHERHAGFAASFSHLLSGLTGAIAPVPISGAAGFIETTKMPSKKPFMLGSILVIVISVIPFFMNTFASLPSPVGFAVNFVVFSAMGGLAFAEFDSYEKEESKRVRSIIGISLLTGVGIMFVPETALKGLHPVFISLLSNGLVLGTLAAIAADQFQLWRRRKSDNLVSTENKH.

A run of 13 helical transmembrane segments spans residues 3 to 23 (LVLG…VVPV), 39 to 59 (LIQS…LKGH), 67 to 87 (PAGL…TVFA), 96 to 116 (LQGA…FKVI), 130 to 150 (VYLL…ILGI), 156 to 176 (GVDG…FIMT), 188 to 208 (ILLA…AKPI), 231 to 251 (GLII…LASM), 283 to 303 (LLSG…AGFI), 314 to 334 (FMLG…MNTF), 341 to 361 (VGFA…FAEF), 374 to 394 (SIIG…ETAL), and 399 to 419 (PVFI…AIAA).

It belongs to the nucleobase:cation symporter-2 (NCS2) (TC 2.A.40) family.

It localises to the cell membrane. The polypeptide is Putative purine permease YwdJ (ywdJ) (Bacillus subtilis (strain 168)).